The sequence spans 2528 residues: Squalestatin tetraketide synthase clz2 (2528 aa).

Residues 14–409 (TVPIAIVGMS…GANAHVILES (396 aa)) form the Ketosynthase family 3 (KS3) domain. Residues C187, H291, and H331 each act as for beta-ketoacyl synthase activity in the active site. Positions 420-457 (VNGHHQKNGTTNGHKGANGTTNELNGTNGTANGHDITT) are disordered. Residues 436–452 (ANGTTNELNGTNGTANG) show a composition bias toward low complexity. The malonyl-CoA:ACP transacylase (MAT) domain stretch occupies residues 538-856 (GAQWFAMGRE…PYLSCLLRGQ (319 aa)). Positions 925–1063 (HDLLGSLIPG…GRIAIELDTS (139 aa)) are N-terminal hotdog fold. Residues 925–1239 (HDLLGSLIPG…NQSVGQIALQ (315 aa)) form the PKS/mFAS DH domain. The interval 925 to 1239 (HDLLGSLIPG…NQSVGQIALQ (315 aa)) is dehydratase (DH) domain. Residue H957 is the Proton acceptor; for dehydratase activity of the active site. The interval 1083–1239 (TRSVDPSNLY…NQSVGQIALQ (157 aa)) is C-terminal hotdog fold. The Proton donor; for dehydratase activity role is filled by D1148. The methyltransferase (CMet) domain stretch occupies residues 1390-1590 (LYRYYTDAIK…GLDVELRDCD (201 aa)). An enoyl reductase (ER) (ER) domain region spans residues 1817–2130 (GLIDTLQFSK…AGKHMGKIVI (314 aa)). Residues 2153-2331 (ASYLIVGGLG…AVSIDLGMVQ (179 aa)) form a ketoreductase (KR) domain region. The tract at residues 2408–2430 (RARDAKEQSNSQGGGTDSKISPG) is disordered. The 78-residue stretch at 2441 to 2518 (EAIDVVGRAI…ALATTVATKS (78 aa)) folds into the Carrier domain. Residue S2478 is modified to O-(pantetheine 4'-phosphoryl)serine.

It functions in the pathway secondary metabolite biosynthesis. In terms of biological role, highly reducing polyketide synthase (HR-PKS); part of the gene cluster that mediates the biosynthesis of squalestatin S1 (SQS1, also known as zaragozic acid A), a heavily oxidized fungal polyketide that offers potent cholesterol lowering activity by targeting squalene synthase (SS). SQS1 is composed of a 2,8-dioxobicyclic[3.2.1]octane-3,4,5-tricarboxyclic acid core that is connected to two lipophilic polyketide arms. These initial steps feature the priming of an unusual benzoic acid starter unit onto the highly reducing polyketide synthase clz14, followed by oxaloacetate extension and product release to generate a tricarboxylic acid containing product. The phenylalanine ammonia lyase (PAL) clz10 and the acyl-CoA ligase clz12 are involved in transforming phenylalanine into benzoyl-CoA. The citrate synthase-like protein clz17 is involved in connecting the C-alpha-carbons of the hexaketide chain and oxaloacetate to afford the tricarboxylic acid unit. The potential hydrolytic enzymes, clz11 and clz13, are in close proximity to pks2 and may participate in product release. On the other side, the tetraketide arm is synthesized by a the squalestatin tetraketide synthase clz2 and enzymatically esterified to the core in the last biosynthetic step, by the acetyltransferase clz6. The biosynthesis of the tetraketide must involve 3 rounds of chain extension. After the first and second rounds methyl-transfer occurs, and in all rounds of extension the ketoreductase and dehydratase are active. The enoyl reductase and C-MeT of clz2 are not active in the final round of extension. The acetyltransferase clz6 appears to have a broad substrate selectivity for its acyl CoA substrate, allowing the in vitro synthesis of novel squalestatins. The biosynthesis of SQS1 requires several oxidative steps likely performed by oxidoreductases clz3, clz15 and clz16. Finally, in support of the identification of the cluster as being responsible for SQS1 production, the cluster contains a gene encoding a putative squalene synthase (SS) clz20, suggesting a likely mechanism for self-resistance. The chain is Squalestatin tetraketide synthase clz2 from Cochliobolus lunatus (Filamentous fungus).